Reading from the N-terminus, the 220-residue chain is Small ribosomal subunit protein uS3c (220 aa).

The region spanning 43–120 (IQHYVEKNTR…RLNIAIIRVA (78 aa)) is the KH type-2 domain.

This sequence belongs to the universal ribosomal protein uS3 family. Part of the 30S ribosomal subunit.

It localises to the plastid. Its subcellular location is the chloroplast. The sequence is that of Small ribosomal subunit protein uS3c (rps3) from Piper cenocladum (Ant piper).